The following is a 220-amino-acid chain: Cytidylate kinase (220 aa).

9–17 (GPAASGKST) contacts ATP.

It belongs to the cytidylate kinase family. Type 1 subfamily.

It localises to the cytoplasm. It catalyses the reaction CMP + ATP = CDP + ADP. It carries out the reaction dCMP + ATP = dCDP + ADP. The protein is Cytidylate kinase of Thermotoga petrophila (strain ATCC BAA-488 / DSM 13995 / JCM 10881 / RKU-1).